Reading from the N-terminus, the 1214-residue chain is MRIDEGFLTPEAIARLQQEEALSDKRHKRTAQQIEAIYSSGQNILVSASAGSGKTFVMVERILDKILRGISVDRLFISTFTVKAATELIERIEKKLHTAIAETQDYQLKAYLNDQLQALSQADIGTMDAFAQKLVHQHGYVLGISPHFRIIQDKAEQDILKREVFRQVFEDYMSQTDNKAFIQLVQNFSGRRKDSSAFREIVDSIYAFSQSTANPSSWLAEVFLRGAKTYTSFADIPDQVVDALLACMQDTADQLRDLTDMEGYAQTTKAGKLTAKYTKHLKMIDNLYEWASHFDSLYGKERLGQLAQELTALLPSGADITVAGHKYPIFKSLQEQLVGFRHLETILAYQQESLPLLEVLQAFVISFSEAYLAAKMQENAFEFSDIAHFAIEILQQAPDIRQAYQGHYHEVMVDEYQDNNHMQERLLELLSNGHNRFMVGDIKQSIYRFRQADPQIFNQKFKDYQSNPEHGKLILLKENFRSQSEVLNVTNAVFSRLMDESLGEITYDDKHQLVAGSEAQKQLHPENRAQLLLYNTDQAQEGTEEASTNDGISAGEVTLVAKEIIRLYNEEKVAFEDITLLVSSRTRNDTIFQVFNQYGIPLVADGGQENYLKSVEVMVMLDTLRSINNPLNDYALVALMRSPMFSFDEDQLARISLQSSSQDQPQAFYDKLSNSLRGQGEHPGLIGQELMTKLVDFDRTLRDWRQFAKLHSLYELIWKIFNDRFYFDFVASQPKAEQAQANLYALAIRADQFEQSGYKGLSRFIGMIDKVLETQNDLADVEVERPKHAVNLMTIHKSKGLEFHYVFILNFDKRFAMADLQAPIILNRDEGIGIKYVANVKELLRDEKLASLKVTMETLPYQLNKQQLRLATLSEQMRLLYVAMTRAEKKVYLVGKASKEKIQAKTADNSSEGRLALASRERLLSFQDWLLAITATFSKEDLFIDVRFVDDSDLTAEAVGQLRSSGLLQADDLKDNRQTEDIARALDMLDKVSKLNASYQAAIELPTVRTPSQLKTLYEPLMDTDGVDIIDQPYHRPKSFELPDFSKKKAVEPSQVGSSLHELMQRIPMSDQITAGDIEQALQLVSADAEVKARLDIKKVTAFFATTELGKLLQEHHQRLYREAPFAILKKDSLSQEQYVVRGIIDGYLLFEDRIVLFDYKTDRYQQSAELKQRYQQQMDLYAEALSQSYGIARVEKYLVLMGGSQLEVVRLDE.

The UvrD-like helicase ATP-binding domain occupies 27-483 (HKRTAQQIEA…ILLKENFRSQ (457 aa)). 48 to 55 (ASAGSGKT) serves as a coordination point for ATP. Positions 512–800 (QLVAGSEAQK…NLMTIHKSKG (289 aa)) constitute a UvrD-like helicase C-terminal domain.

It belongs to the helicase family. AddA subfamily. As to quaternary structure, heterodimer of AddA and AddB/RexB. Mg(2+) serves as cofactor.

The enzyme catalyses Couples ATP hydrolysis with the unwinding of duplex DNA by translocating in the 3'-5' direction.. It carries out the reaction ATP + H2O = ADP + phosphate + H(+). Its function is as follows. The heterodimer acts as both an ATP-dependent DNA helicase and an ATP-dependent, dual-direction single-stranded exonuclease. Recognizes the chi site generating a DNA molecule suitable for the initiation of homologous recombination. The AddA nuclease domain is required for chi fragment generation; this subunit has the helicase and 3' -&gt; 5' nuclease activities. This chain is ATP-dependent helicase/nuclease subunit A, found in Streptococcus equi subsp. zooepidemicus (strain MGCS10565).